A 260-amino-acid polypeptide reads, in one-letter code: Pyridoxine 5'-phosphate synthase (260 aa).

Residue N15 participates in 3-amino-2-oxopropyl phosphate binding. Residue 17–18 (DH) participates in 1-deoxy-D-xylulose 5-phosphate binding. 3-amino-2-oxopropyl phosphate is bound at residue R26. H51 (proton acceptor) is an active-site residue. 1-deoxy-D-xylulose 5-phosphate is bound by residues R53 and H58. Residue E78 is the Proton acceptor of the active site. T108 serves as a coordination point for 1-deoxy-D-xylulose 5-phosphate. H199 (proton donor) is an active-site residue. 3-amino-2-oxopropyl phosphate contacts are provided by residues G200 and 221-222 (GH).

The protein belongs to the PNP synthase family. As to quaternary structure, homooctamer; tetramer of dimers.

Its subcellular location is the cytoplasm. It carries out the reaction 3-amino-2-oxopropyl phosphate + 1-deoxy-D-xylulose 5-phosphate = pyridoxine 5'-phosphate + phosphate + 2 H2O + H(+). It functions in the pathway cofactor biosynthesis; pyridoxine 5'-phosphate biosynthesis; pyridoxine 5'-phosphate from D-erythrose 4-phosphate: step 5/5. In terms of biological role, catalyzes the complicated ring closure reaction between the two acyclic compounds 1-deoxy-D-xylulose-5-phosphate (DXP) and 3-amino-2-oxopropyl phosphate (1-amino-acetone-3-phosphate or AAP) to form pyridoxine 5'-phosphate (PNP) and inorganic phosphate. The polypeptide is Pyridoxine 5'-phosphate synthase (Cupriavidus pinatubonensis (strain JMP 134 / LMG 1197) (Cupriavidus necator (strain JMP 134))).